Consider the following 189-residue polypeptide: Protein GrpE (189 aa).

Residues methionine 1 to isoleucine 14 are compositionally biased toward basic and acidic residues. Positions methionine 1–aspartate 38 are disordered. Residues glutamine 17–valine 35 show a composition bias toward acidic residues.

It belongs to the GrpE family. As to quaternary structure, homodimer.

The protein resides in the cytoplasm. Functionally, participates actively in the response to hyperosmotic and heat shock by preventing the aggregation of stress-denatured proteins, in association with DnaK and GrpE. It is the nucleotide exchange factor for DnaK and may function as a thermosensor. Unfolded proteins bind initially to DnaJ; upon interaction with the DnaJ-bound protein, DnaK hydrolyzes its bound ATP, resulting in the formation of a stable complex. GrpE releases ADP from DnaK; ATP binding to DnaK triggers the release of the substrate protein, thus completing the reaction cycle. Several rounds of ATP-dependent interactions between DnaJ, DnaK and GrpE are required for fully efficient folding. This Leuconostoc mesenteroides subsp. mesenteroides (strain ATCC 8293 / DSM 20343 / BCRC 11652 / CCM 1803 / JCM 6124 / NCDO 523 / NBRC 100496 / NCIMB 8023 / NCTC 12954 / NRRL B-1118 / 37Y) protein is Protein GrpE.